The primary structure comprises 63 residues: Cytochrome b-c1 complex subunit 9 (63 aa).

At alanine 2 to phenylalanine 21 the chain is on the mitochondrial matrix side. A helical membrane pass occupies residues alanine 22 to isoleucine 47. Residues asparagine 48 to lysine 63 lie on the Mitochondrial intermembrane side of the membrane.

It belongs to the UQCR10/QCR9 family. As to quaternary structure, component of the ubiquinol-cytochrome c oxidoreductase (cytochrome b-c1 complex, complex III, CIII), a multisubunit enzyme composed of 11 subunits. The complex is composed of 3 respiratory subunits cytochrome b, cytochrome c1 and Rieske protein UQCRFS1, 2 core protein subunits UQCRC1/QCR1 and UQCRC2/QCR2, and 6 low-molecular weight protein subunits UQCRH/QCR6, UQCRB/QCR7, UQCRQ/QCR8, UQCR10/QCR9, UQCR11/QCR10 and subunit 9, the cleavage product of Rieske protein UQCRFS1. The complex exists as an obligatory dimer and forms supercomplexes (SCs) in the inner mitochondrial membrane with NADH-ubiquinone oxidoreductase (complex I, CI) and cytochrome c oxidase (complex IV, CIV), resulting in different assemblies (supercomplex SCI(1)III(2)IV(1) and megacomplex MCI(2)III(2)IV(2)). Interacts with STMP1.

The protein localises to the mitochondrion inner membrane. Functionally, component of the ubiquinol-cytochrome c oxidoreductase, a multisubunit transmembrane complex that is part of the mitochondrial electron transport chain which drives oxidative phosphorylation. The respiratory chain contains 3 multisubunit complexes succinate dehydrogenase (complex II, CII), ubiquinol-cytochrome c oxidoreductase (cytochrome b-c1 complex, complex III, CIII) and cytochrome c oxidase (complex IV, CIV), that cooperate to transfer electrons derived from NADH and succinate to molecular oxygen, creating an electrochemical gradient over the inner membrane that drives transmembrane transport and the ATP synthase. The cytochrome b-c1 complex catalyzes electron transfer from ubiquinol to cytochrome c, linking this redox reaction to translocation of protons across the mitochondrial inner membrane, with protons being carried across the membrane as hydrogens on the quinol. In the process called Q cycle, 2 protons are consumed from the matrix, 4 protons are released into the intermembrane space and 2 electrons are passed to cytochrome c. This chain is Cytochrome b-c1 complex subunit 9 (UQCR10), found in Homo sapiens (Human).